We begin with the raw amino-acid sequence, 350 residues long: Ion-translocating oxidoreductase complex subunit D (350 aa).

Helical transmembrane passes span Val-20–Gly-40, Leu-44–Ile-64, Pro-68–Ser-88, Ile-89–Val-109, and Met-125–Val-145. FMN phosphoryl threonine is present on Thr-187. 5 helical membrane passes run Ser-215 to Phe-235, Trp-241 to Tyr-261, Ala-267 to Ser-287, Ile-300 to Pro-320, and Ala-322 to Gln-342.

Belongs to the NqrB/RnfD family. As to quaternary structure, the complex is composed of six subunits: RnfA, RnfB, RnfC, RnfD, RnfE and RnfG. Requires FMN as cofactor.

The protein resides in the cell inner membrane. Part of a membrane-bound complex that couples electron transfer with translocation of ions across the membrane. The sequence is that of Ion-translocating oxidoreductase complex subunit D from Psychromonas ingrahamii (strain DSM 17664 / CCUG 51855 / 37).